A 229-amino-acid chain; its full sequence is Large ribosomal subunit protein uL1 (229 aa).

This sequence belongs to the universal ribosomal protein uL1 family. Part of the 50S ribosomal subunit.

Functionally, binds directly to 23S rRNA. The L1 stalk is quite mobile in the ribosome, and is involved in E site tRNA release. In terms of biological role, protein L1 is also a translational repressor protein, it controls the translation of the L11 operon by binding to its mRNA. The sequence is that of Large ribosomal subunit protein uL1 from Rhodopseudomonas palustris (strain HaA2).